Here is a 159-residue protein sequence, read N- to C-terminus: Intron-encoded endonuclease ai4 (159 aa).

The protein belongs to the LAGLIDADG endonuclease family.

Its subcellular location is the mitochondrion. In terms of biological role, mitochondrial DNA endonuclease involved in intron homing. This is Intron-encoded endonuclease ai4 (ai4) from Dictyostelium discoideum (Social amoeba).